The primary structure comprises 486 residues: Probable FAD-binding monooxygenase ltbD (486 aa).

The segment at 186-243 (PAGDGGTNDQGPSRAQSTASSGGSGRPRSTESPQSGAQASTTPTSPPTTQSTGDDPAA) is disordered. Over residues 194–206 (DQGPSRAQSTASS) the composition is skewed to polar residues. Over residues 220 to 241 (SGAQASTTPTSPPTTQSTGDDP) the composition is skewed to low complexity.

This sequence belongs to the FAD-binding monooxygenase family. In terms of assembly, homodimer. Requires FAD as cofactor.

Its function is as follows. Probable FAD-binding monooxygenase; part of the gene cluster that mediates the biosynthesis of luteodienoside A, a glycosylated polyketide consisting of an unusual 1-O-beta-D-glucopyranosyl-myo-inositol (glucinol) ester of 3-hydroxy-2,2,4-trimethylocta-4,6-dienoic acid. The HR-PKS ltbA produces the trimethylated polyketide chain from acetyl-CoA, malonyl-CoA and S-adenosylmethionine (SAM), and the ltbA cAT domain then uses glucinol produced by the glycosyltransferase ltbB as an offloading substrate to release luteodienoside A. Since ltbA and ltbB are sufficient for the biosynthesis of luteodienoside A, the functions of the methyltransferase ltbC and the FAD-binding monooxygenase ltbD within the pathway remain obscur. In Aspergillus luteorubrus, this protein is Probable FAD-binding monooxygenase ltbD.